Here is a 347-residue protein sequence, read N- to C-terminus: Ribosomal RNA small subunit methyltransferase C (347 aa).

The protein belongs to the methyltransferase superfamily. RsmC family. Monomer.

It localises to the cytoplasm. The enzyme catalyses guanosine(1207) in 16S rRNA + S-adenosyl-L-methionine = N(2)-methylguanosine(1207) in 16S rRNA + S-adenosyl-L-homocysteine + H(+). Specifically methylates the guanine in position 1207 of 16S rRNA in the 30S particle. In Shewanella putrefaciens (strain CN-32 / ATCC BAA-453), this protein is Ribosomal RNA small subunit methyltransferase C.